The chain runs to 426 residues: Pyrophosphate--fructose 6-phosphate 1-phosphotransferase 1 (426 aa).

Glycine 15 serves as a coordination point for diphosphate. Aspartate 114 contributes to the Mg(2+) binding site. Residues 140-142 (TID), 186-188 (MGR), glutamate 247, and 308-311 (YELR) contribute to the substrate site. Aspartate 142 acts as the Proton acceptor in catalysis.

It belongs to the phosphofructokinase type A (PFKA) family. PPi-dependent PFK group II subfamily. Clade 'Short' sub-subfamily. As to quaternary structure, homotetramer. Mg(2+) is required as a cofactor.

Its subcellular location is the cytoplasm. The catalysed reaction is beta-D-fructose 6-phosphate + diphosphate = beta-D-fructose 1,6-bisphosphate + phosphate + H(+). It participates in carbohydrate degradation; glycolysis; D-glyceraldehyde 3-phosphate and glycerone phosphate from D-glucose: step 3/4. Non-allosteric. Its function is as follows. Catalyzes the phosphorylation of D-fructose 6-phosphate, the first committing step of glycolysis. Uses inorganic phosphate (PPi) as phosphoryl donor instead of ATP like common ATP-dependent phosphofructokinases (ATP-PFKs), which renders the reaction reversible, and can thus function both in glycolysis and gluconeogenesis. Consistently, PPi-PFK can replace the enzymes of both the forward (ATP-PFK) and reverse (fructose-bisphosphatase (FBPase)) reactions. This is Pyrophosphate--fructose 6-phosphate 1-phosphotransferase 1 (Pfk1) from Trichomonas vaginalis (strain ATCC PRA-98 / G3).